A 706-amino-acid polypeptide reads, in one-letter code: Drebrin (706 aa).

Ala2 is modified (N-acetylalanine). One can recognise an ADF-H domain in the interval 3–134 (GVSFSGHRLE…DAGAIGQRLS (132 aa)). Ser141 and Ser142 each carry phosphoserine. Residues 209–236 (ERMEQERQEQEERERRYREREQQIEEHR) show a composition bias toward basic and acidic residues. Positions 209–497 (ERMEQERQEQ…AEPAASVTSV (289 aa)) are disordered. Ser241 is subject to Phosphoserine. Residues 288-298 (DNPREFFRQQE) show a composition bias toward basic and acidic residues. Low complexity predominate over residues 331 to 345 (SDSGPSSSSSSSSSP). Position 344 is a phosphoserine (Ser344). Residues 357 to 366 (RTPNLSSSLP) show a composition bias toward polar residues. Thr379 and Thr383 each carry phosphothreonine. The segment covering 382-396 (PTRSPSDSSTASTPI) has biased composition (polar residues). A phosphoserine mark is found at Ser385, Ser387, and Ser393. At Thr394 the chain carries Phosphothreonine. The span at 411-422 (QPPPPPPPPPPT) shows a compositional bias: pro residues. Low complexity predominate over residues 453-497 (AAEPPQAQEPPLLQSSPLEDSMCTESPEQAALAAPAEPAASVTSV). Ser468 is subject to Phosphoserine. The residue at position 550 (Thr550) is a Phosphothreonine. Positions 633–677 (EPHLLTNGETTQKEGTQASEGYFSQSQEEEFAQSEEPCAKVPPPV) are disordered. Residues 639–651 (NGETTQKEGTQAS) show a composition bias toward polar residues. A Phosphoserine modification is found at Ser658.

As to quaternary structure, interacts with RUFY3. Interacts with CXCR4; this interaction is enhanced by antigenic stimulation. Interacts (via ADF-H domain) with ZMYND8 (via N-terminus); the interaction leads to sequestering of ZMYND8 in the cytoplasm. As to expression, expressed in the hippocampus, with expression in the pyramidal cells of CA1, CA2 and CA3 and in the granule cells of the dentate gyrus (at protein level). Highly expressed in brain, also present in stomach and to a lesser degree in kidney, colon, and urinary bladder. The E2 isoform is specifically expressed in adult stomach, kidney, and cultured cells.

Its subcellular location is the cytoplasm. It is found in the cell projection. It localises to the dendrite. The protein localises to the cell cortex. The protein resides in the cell junction. Its subcellular location is the growth cone. Its function is as follows. Actin cytoskeleton-organizing protein that plays a role in the formation of cell projections. Required for actin polymerization at immunological synapses (IS) and for the recruitment of the chemokine receptor CXCR4 to IS. Plays a role in dendritic spine morphogenesis and organization, including the localization of the dopamine receptor DRD1 to the dendritic spines. Involved in memory-related synaptic plasticity in the hippocampus. The polypeptide is Drebrin (Dbn1) (Mus musculus (Mouse)).